Here is a 201-residue protein sequence, read N- to C-terminus: Dephospho-CoA kinase (201 aa).

In terms of domain architecture, DPCK spans 10-201 (LIGLTGGIAT…PQIIKAWHHR (192 aa)). 18 to 23 (ATGKST) contacts ATP.

The protein belongs to the CoaE family.

Its subcellular location is the cytoplasm. The enzyme catalyses 3'-dephospho-CoA + ATP = ADP + CoA + H(+). The protein operates within cofactor biosynthesis; coenzyme A biosynthesis; CoA from (R)-pantothenate: step 5/5. Functionally, catalyzes the phosphorylation of the 3'-hydroxyl group of dephosphocoenzyme A to form coenzyme A. The polypeptide is Dephospho-CoA kinase (Synechocystis sp. (strain ATCC 27184 / PCC 6803 / Kazusa)).